The sequence spans 315 residues: MDHSEIDVETSPLTAADAQAVHRLARAAEHVDQVAPLSEQPLLRLLDAEAPTTHLMVRAADDLAGYAQVDRGAPGTASAELVVHPFARHHGVGTALLEHALELMDAEGRVLSVWAHGDLPAARSLAARTGLVVVRELWKMHLPLDGSTSTPESAPAAPLAPGVSLRAFRPGEDDAAWLAVNARAFASHPEQGRLTQTDLAARVAEPWFDAGSFLLAERDGDLVGFCWLKVPADQPQDAPRVGEIYALGVDPSAQGLRLGTALTAAGLDRLREVGVEVVELYTEGDNTVAIRTYTAAGFTRATVDVQMARPSDATA.

N-acetyltransferase domains follow at residues 8–145 and 163–315; these read VETS…LPLD and VSLR…DATA. E39 lines the 1D-myo-inositol 2-(L-cysteinylamino)-2-deoxy-alpha-D-glucopyranoside pocket. Acetyl-CoA-binding positions include 81–83 and 89–94; these read LVV and HHGVGT. 1D-myo-inositol 2-(L-cysteinylamino)-2-deoxy-alpha-D-glucopyranoside-binding residues include E190, K229, and E243. 247–249 lines the acetyl-CoA pocket; sequence LGV. Y281 contacts 1D-myo-inositol 2-(L-cysteinylamino)-2-deoxy-alpha-D-glucopyranoside. 286 to 291 serves as a coordination point for acetyl-CoA; sequence NTVAIR.

It belongs to the acetyltransferase family. MshD subfamily. In terms of assembly, monomer.

It carries out the reaction 1D-myo-inositol 2-(L-cysteinylamino)-2-deoxy-alpha-D-glucopyranoside + acetyl-CoA = mycothiol + CoA + H(+). Functionally, catalyzes the transfer of acetyl from acetyl-CoA to desacetylmycothiol (Cys-GlcN-Ins) to form mycothiol. In Sanguibacter keddieii (strain ATCC 51767 / DSM 10542 / NCFB 3025 / ST-74), this protein is Mycothiol acetyltransferase.